A 298-amino-acid polypeptide reads, in one-letter code: NAD kinase (298 aa).

The active-site Proton acceptor is the Asp-80. NAD(+) is bound by residues 80–81, 154–155, Arg-182, Asp-184, 195–200, Ala-219, and Gln-253; these read DG, ND, and TAYALS.

It belongs to the NAD kinase family. It depends on a divalent metal cation as a cofactor.

Its subcellular location is the cytoplasm. It carries out the reaction NAD(+) + ATP = ADP + NADP(+) + H(+). Functionally, involved in the regulation of the intracellular balance of NAD and NADP, and is a key enzyme in the biosynthesis of NADP. Catalyzes specifically the phosphorylation on 2'-hydroxyl of the adenosine moiety of NAD to yield NADP. In Delftia acidovorans (strain DSM 14801 / SPH-1), this protein is NAD kinase.